Consider the following 230-residue polypeptide: Large ribosomal subunit protein uL1 (230 aa).

This sequence belongs to the universal ribosomal protein uL1 family. Part of the 50S ribosomal subunit.

Functionally, binds directly to 23S rRNA. The L1 stalk is quite mobile in the ribosome, and is involved in E site tRNA release. Its function is as follows. Protein L1 is also a translational repressor protein, it controls the translation of the L11 operon by binding to its mRNA. The polypeptide is Large ribosomal subunit protein uL1 (Bifidobacterium longum subsp. infantis (strain ATCC 15697 / DSM 20088 / JCM 1222 / NCTC 11817 / S12)).